Reading from the N-terminus, the 807-residue chain is Ribosome biogenesis protein ERB1 (807 aa).

Residues 1-112 (MMAKNNKTTE…DTTSLTDRLS (112 aa)) are disordered. Acidic residues-rich tracts occupy residues 21–30 (EESDVEEDED) and 42–56 (EASESDEDDDEYESA). A Phosphoserine modification is found at Ser23. Residues 57-69 (VEEKESSSDKEAQ) show a composition bias toward basic and acidic residues. 2 positions are modified to phosphoserine: Ser72 and Ser76. The span at 86 to 102 (EEEGDEEEDYDSSEFSD) shows a compositional bias: acidic residues. Lys127 is covalently cross-linked (Glycyl lysine isopeptide (Lys-Gly) (interchain with G-Cter in ubiquitin)). A phosphoserine mark is found at Ser146 and Ser149. The segment at 265 to 383 (RFVPSKNEAK…LRKVPGYGES (119 aa)) is required for interaction with NOP7. The required for interaction with YTM1 stretch occupies residues 383–419 (SIRERFERSLDLYLAPRVRKNKLNIDPNSLIPELPSP). Ser418 bears the Phosphoserine mark. WD repeat units follow at residues 435–474 (GHKGKVRTLSIDPSGLWLATGSDDGTVRVWEILTGREVYR), 483–523 (NPDD…YDIE), 592–634 (SCKK…TQSP), 637–675 (KSKGIIMDAKFHPFKPQLFVCSQRYVRIYDLSQQILVKK), 678–717 (PGARWLSKIDIHPRGDNLIASSFDKRVLWHDLDLASTPYK), 721–760 (YHEKAVRSVNFHKKLPLFSSAADDGTIHVFHATVYDDMMK), and 776–807 (INSLGVLDAIWHPREAWLFSAGADNTARLWTT).

It belongs to the WD repeat BOP1/ERB1 family. Component of the NOP7 complex, composed of ERB1, NOP7 and YTM1. The complex is held together by ERB1, which interacts with NOP7 via its N-terminal domain and with YTM1 via a high-affinity interaction between the seven-bladed beta-propeller domains of the 2 proteins. The NOP7 complex associates with the 66S pre-ribosome.

Its subcellular location is the nucleus. The protein localises to the nucleolus. It is found in the nucleoplasm. Functionally, component of the NOP7 complex, which is required for maturation of the 25S and 5.8S ribosomal RNAs and formation of the 60S ribosome. The sequence is that of Ribosome biogenesis protein ERB1 from Saccharomyces cerevisiae (strain YJM789) (Baker's yeast).